The primary structure comprises 699 residues: Ribosomal RNA large subunit methyltransferase K/L (699 aa).

A THUMP domain is found at 44-155 (DAYKLCLWSR…RDNVILGIDL (112 aa)).

It belongs to the methyltransferase superfamily. RlmKL family.

Its subcellular location is the cytoplasm. It carries out the reaction guanosine(2445) in 23S rRNA + S-adenosyl-L-methionine = N(2)-methylguanosine(2445) in 23S rRNA + S-adenosyl-L-homocysteine + H(+). The catalysed reaction is guanosine(2069) in 23S rRNA + S-adenosyl-L-methionine = N(2)-methylguanosine(2069) in 23S rRNA + S-adenosyl-L-homocysteine + H(+). In terms of biological role, specifically methylates the guanine in position 2445 (m2G2445) and the guanine in position 2069 (m7G2069) of 23S rRNA. The chain is Ribosomal RNA large subunit methyltransferase K/L from Alteromonas mediterranea (strain DSM 17117 / CIP 110805 / LMG 28347 / Deep ecotype).